The following is a 298-amino-acid chain: tRNA-cytidine(32) 2-sulfurtransferase (298 aa).

The PP-loop motif signature appears at 48–53; sequence SGGKDS. [4Fe-4S] cluster contacts are provided by Cys-123, Cys-126, and Cys-214.

It belongs to the TtcA family. In terms of assembly, homodimer. Mg(2+) is required as a cofactor. [4Fe-4S] cluster serves as cofactor.

It is found in the cytoplasm. It catalyses the reaction cytidine(32) in tRNA + S-sulfanyl-L-cysteinyl-[cysteine desulfurase] + AH2 + ATP = 2-thiocytidine(32) in tRNA + L-cysteinyl-[cysteine desulfurase] + A + AMP + diphosphate + H(+). The protein operates within tRNA modification. In terms of biological role, catalyzes the ATP-dependent 2-thiolation of cytidine in position 32 of tRNA, to form 2-thiocytidine (s(2)C32). The sulfur atoms are provided by the cysteine/cysteine desulfurase (IscS) system. The chain is tRNA-cytidine(32) 2-sulfurtransferase from Nitrosospira multiformis (strain ATCC 25196 / NCIMB 11849 / C 71).